The following is a 151-amino-acid chain: uncharacterized protein (151 aa).

This is an uncharacterized protein from Acanthamoeba polyphaga mimivirus (APMV).